The following is a 207-amino-acid chain: Probable mediator of RNA polymerase II transcription subunit 19b (207 aa).

Positions 99 to 207 (DTAPVELPPA…SSKLDEMGAM (109 aa)) are disordered. Basic residues predominate over residues 127–152 (DRKHRKHKDKKEKDREHKKHKHKHKD). The segment covering 153 to 167 (RIKDKDKDKDRDKKK) has biased composition (basic and acidic residues). The segment covering 168 to 179 (EKSGHHDKKRKN) has biased composition (basic residues).

This sequence belongs to the plant Mediator complex subunit 19 family. Component of the Mediator complex.

Its subcellular location is the nucleus. Its function is as follows. Component of the Mediator complex, a coactivator involved in the regulated transcription of nearly all RNA polymerase II-dependent genes. Mediator functions as a bridge to convey information from gene-specific regulatory proteins to the basal RNA polymerase II transcription machinery. The Mediator complex, having a compact conformation in its free form, is recruited to promoters by direct interactions with regulatory proteins and serves for the assembly of a functional preinitiation complex with RNA polymerase II and the general transcription factors. This chain is Probable mediator of RNA polymerase II transcription subunit 19b (MED19B), found in Arabidopsis thaliana (Mouse-ear cress).